Consider the following 241-residue polypeptide: NAD-dependent protein deacylase (241 aa).

The 237-residue stretch at Met1–Leu237 folds into the Deacetylase sirtuin-type domain. Gly13–Trp32 contacts NAD(+). Residues Tyr57 and Arg60 each contribute to the substrate site. NAD(+) is bound at residue Gln94–Asp97. His112 acts as the Proton acceptor in catalysis. Residues Cys120 and Cys139 each contribute to the Zn(2+) site. Residues Gly179–Ser181, Asn205–Glu207, and Ala223 each bind NAD(+).

The protein belongs to the sirtuin family. Class III subfamily. As to quaternary structure, monomer. It depends on Zn(2+) as a cofactor.

It localises to the cytoplasm. It is found in the host cytoplasm. The protein resides in the host cytosol. The protein localises to the host nucleus. It catalyses the reaction N(6)-acetyl-L-lysyl-[protein] + NAD(+) + H2O = 2''-O-acetyl-ADP-D-ribose + nicotinamide + L-lysyl-[protein]. It carries out the reaction N(6)-succinyl-L-lysyl-[protein] + NAD(+) + H2O = 2''-O-succinyl-ADP-D-ribose + nicotinamide + L-lysyl-[protein]. In terms of biological role, NAD-dependent lysine deacetylase and desuccinylase that specifically removes acetyl and succinyl groups on target proteins. Modulates the activities of several proteins which are inactive in their acylated form. In the intracellular pathogen V.parahaemolyticus, this enzyme regulates host response during infection by induction of host histone deacetylation; it specifically causes deacetylation of histone lysine residues H3K56, H3K9, H3K18 and H4K16 which results in transcriptional repression of several host genes involved in epigenetic regulation, immune response, and autophagy. The sequence is that of NAD-dependent protein deacylase from Vibrio parahaemolyticus serotype O3:K6 (strain RIMD 2210633).